The sequence spans 215 residues: NADH-quinone oxidoreductase subunit C (215 aa).

It belongs to the complex I 30 kDa subunit family. As to quaternary structure, NDH-1 is composed of 14 different subunits. Subunits NuoB, C, D, E, F, and G constitute the peripheral sector of the complex.

The protein localises to the cell inner membrane. The enzyme catalyses a quinone + NADH + 5 H(+)(in) = a quinol + NAD(+) + 4 H(+)(out). Its function is as follows. NDH-1 shuttles electrons from NADH, via FMN and iron-sulfur (Fe-S) centers, to quinones in the respiratory chain. The immediate electron acceptor for the enzyme in this species is believed to be ubiquinone. Couples the redox reaction to proton translocation (for every two electrons transferred, four hydrogen ions are translocated across the cytoplasmic membrane), and thus conserves the redox energy in a proton gradient. This Methylobacterium radiotolerans (strain ATCC 27329 / DSM 1819 / JCM 2831 / NBRC 15690 / NCIMB 10815 / 0-1) protein is NADH-quinone oxidoreductase subunit C.